A 256-amino-acid chain; its full sequence is Dihydromonacolin L-[lovastatin nonaketide synthase] thioesterase (256 aa).

Residues Ser-122, Asp-201, and His-229 each act as charge relay system in the active site.

Belongs to the LovG family.

The catalysed reaction is dihydromonacolin L-[lovastatin nonaketide synthase] + H2O = holo-[lovastatin nonaketide synthase] + dihydromonacolin L carboxylate + H(+). The protein operates within polyketide biosynthesis; lovastatin biosynthesis. Esterase; part of the gene cluster that mediates the biosynthesis of lovastatin (also known as mevinolin, mevacor or monacolin K), a hypolipidemic inhibitor of (3S)-hydroxymethylglutaryl-coenzyme A (HMG-CoA) reductase (HMGR). The first step in the biosynthesis of lovastatin is the production of dihydromonacolin L acid by the lovastatin nonaketide synthase lovB and the trans-acting enoyl reductase lovC via condensation of one acetyl-CoA unit and 8 malonyl-CoA units. Dihydromonacolin L acid is released from lovB by the thioesterase lovG. Next, dihydromonacolin L acid is oxidized by the dihydromonacolin L monooxygenase lovA twice to form monacolin J acid. The 2-methylbutyrate moiety of lovastatin is synthesized by the lovastatin diketide synthase lovF via condensation of one acetyl-CoA unit and one malonyl-CoA unit. Finally, the covalent attachment of this moiety to monacolin J acid is catalyzed by the transesterase lovD to yield lovastatin. LovD has broad substrate specificity and can also convert monacolin J to simvastatin using alpha-dimethylbutanoyl-S-methyl-3-mercaptopropionate (DMB-S-MMP) as the thioester acyl donor, and can also catalyze the reverse reaction and function as hydrolase in vitro. LovD has much higher activity with LovF-bound 2-methylbutanoate than with free diketide substrates. Functionally, esterase that catalyzes the release of covalently bound dihydromonacolin L from LovB during lovastatin biosynthesis. The sequence is that of Dihydromonacolin L-[lovastatin nonaketide synthase] thioesterase from Aspergillus terreus (strain NIH 2624 / FGSC A1156).